Consider the following 196-residue polypeptide: Imidazoleglycerol-phosphate dehydratase (196 aa).

Belongs to the imidazoleglycerol-phosphate dehydratase family.

It localises to the cytoplasm. The enzyme catalyses D-erythro-1-(imidazol-4-yl)glycerol 3-phosphate = 3-(imidazol-4-yl)-2-oxopropyl phosphate + H2O. The protein operates within amino-acid biosynthesis; L-histidine biosynthesis; L-histidine from 5-phospho-alpha-D-ribose 1-diphosphate: step 6/9. The polypeptide is Imidazoleglycerol-phosphate dehydratase (Clostridium botulinum (strain Langeland / NCTC 10281 / Type F)).